Consider the following 179-residue polypeptide: ATP synthase subunit delta (179 aa).

It belongs to the ATPase delta chain family. As to quaternary structure, F-type ATPases have 2 components, F(1) - the catalytic core - and F(0) - the membrane proton channel. F(1) has five subunits: alpha(3), beta(3), gamma(1), delta(1), epsilon(1). F(0) has three main subunits: a(1), b(2) and c(10-14). The alpha and beta chains form an alternating ring which encloses part of the gamma chain. F(1) is attached to F(0) by a central stalk formed by the gamma and epsilon chains, while a peripheral stalk is formed by the delta and b chains.

It localises to the cell inner membrane. Its function is as follows. F(1)F(0) ATP synthase produces ATP from ADP in the presence of a proton or sodium gradient. F-type ATPases consist of two structural domains, F(1) containing the extramembraneous catalytic core and F(0) containing the membrane proton channel, linked together by a central stalk and a peripheral stalk. During catalysis, ATP synthesis in the catalytic domain of F(1) is coupled via a rotary mechanism of the central stalk subunits to proton translocation. This protein is part of the stalk that links CF(0) to CF(1). It either transmits conformational changes from CF(0) to CF(1) or is implicated in proton conduction. The sequence is that of ATP synthase subunit delta from Acidobacterium capsulatum (strain ATCC 51196 / DSM 11244 / BCRC 80197 / JCM 7670 / NBRC 15755 / NCIMB 13165 / 161).